The primary structure comprises 501 residues: Acetylcholine receptor subunit beta (501 aa).

Positions 1 to 23 (MALGALLLILGILGTPLAPGARG) are cleaved as a signal peptide. At 24 to 244 (SEAEGQLLKK…VIFYLIIRRK (221 aa)) the chain is on the extracellular side. Cysteines 151 and 165 form a disulfide. N-linked (GlcNAc...) asparagine glycosylation occurs at N164. The next 3 helical transmembrane spans lie at 245–269 (PLFY…VFYL), 277–295 (MGLS…LLLA), and 311–332 (YLMF…VLNL). At 333–469 (HHRSPHTHQM…WQFVAMVVDR (137 aa)) the chain is on the cytoplasmic side. Residues 362–381 (RPKPERDQLPEPHHSFSPRS) form a disordered region. Residues 363-375 (PKPERDQLPEPHH) show a composition bias toward basic and acidic residues. Y390 bears the Phosphotyrosine; by Tyr-kinases mark. Residues 470-488 (LFLWTFIVFTSVGTLVIFL) form a helical membrane-spanning segment.

This sequence belongs to the ligand-gated ion channel (TC 1.A.9) family. Acetylcholine receptor (TC 1.A.9.1) subfamily. Beta-1/CHRNB1 sub-subfamily. In terms of assembly, pentamer of two alpha chains, and one each of the beta, delta, and gamma (in immature muscle) or epsilon (in mature muscle) chains. The muscle heteropentamer composed of alpha-1, beta-1, delta, epsilon subunits interacts with the alpha-conotoxin ImII.

The protein localises to the postsynaptic cell membrane. Its subcellular location is the cell membrane. The catalysed reaction is K(+)(in) = K(+)(out). It carries out the reaction Na(+)(in) = Na(+)(out). Functionally, after binding acetylcholine, the AChR responds by an extensive change in conformation that affects all subunits and leads to opening of an ion-conducting channel across the plasma membrane. In Rattus norvegicus (Rat), this protein is Acetylcholine receptor subunit beta (Chrnb1).